A 562-amino-acid polypeptide reads, in one-letter code: uncharacterized protein (562 aa).

This is an uncharacterized protein from Escherichia coli (strain K12).